We begin with the raw amino-acid sequence, 148 residues long: Nickel and cobalt resistance protein CnrR (148 aa).

The signal sequence occupies residues methionine 1–alanine 26. Residues leucine 28–glutamine 148 are Periplasmic-facing. A coiled-coil region spans residues asparagine 54–leucine 117.

The protein to A.xylosoxydans NccX.

It localises to the periplasm. CnrH alone is able to activate cnr expression, while both CnrY and CrnR (CnrX) are needed for nickel induction of CnrH. Has been suggested to bind nickel. This is Nickel and cobalt resistance protein CnrR (cnrR) from Cupriavidus metallidurans (strain ATCC 43123 / DSM 2839 / NBRC 102507 / CH34) (Ralstonia metallidurans).